A 367-amino-acid polypeptide reads, in one-letter code: tRNA-specific 2-thiouridylase MnmA (367 aa).

ATP-binding positions include glycine 12–serine 19 and methionine 38. Residues asparagine 98 to aspartate 100 form an interaction with target base in tRNA region. Residue cysteine 103 is the Nucleophile of the active site. A disulfide bond links cysteine 103 and cysteine 200. An ATP-binding site is contributed by glycine 128. Residues lysine 150 to glutamine 152 form an interaction with tRNA region. Cysteine 200 serves as the catalytic Cysteine persulfide intermediate. The interval arginine 312–tyrosine 313 is interaction with tRNA.

The protein belongs to the MnmA/TRMU family. In terms of assembly, interacts with TusE.

The protein resides in the cytoplasm. The catalysed reaction is S-sulfanyl-L-cysteinyl-[protein] + uridine(34) in tRNA + AH2 + ATP = 2-thiouridine(34) in tRNA + L-cysteinyl-[protein] + A + AMP + diphosphate + H(+). Catalyzes the 2-thiolation of uridine at the wobble position (U34) of tRNA(Lys), tRNA(Glu) and tRNA(Gln), leading to the formation of s(2)U34, the first step of tRNA-mnm(5)s(2)U34 synthesis. Sulfur is provided by IscS, via a sulfur-relay system. Binds ATP and its substrate tRNAs. In Blochmanniella pennsylvanica (strain BPEN), this protein is tRNA-specific 2-thiouridylase MnmA.